Consider the following 368-residue polypeptide: Phosphate acyltransferase (368 aa).

The disordered stretch occupies residues 335–368; the sequence is VSLGDGEHDAGGAGHTGPAAGQHAEPPAAQSSKA.

It belongs to the PlsX family. As to quaternary structure, homodimer. Probably interacts with PlsY.

It localises to the cytoplasm. It carries out the reaction a fatty acyl-[ACP] + phosphate = an acyl phosphate + holo-[ACP]. Its pathway is lipid metabolism; phospholipid metabolism. Its function is as follows. Catalyzes the reversible formation of acyl-phosphate (acyl-PO(4)) from acyl-[acyl-carrier-protein] (acyl-ACP). This enzyme utilizes acyl-ACP as fatty acyl donor, but not acyl-CoA. The polypeptide is Phosphate acyltransferase (Burkholderia vietnamiensis (strain G4 / LMG 22486) (Burkholderia cepacia (strain R1808))).